We begin with the raw amino-acid sequence, 451 residues long: Cobyrinate a,c-diamide synthase (451 aa).

The GATase cobBQ-type domain occupies Lys246–Asn437. Cys328 functions as the Nucleophile in the catalytic mechanism.

The protein belongs to the CobB/CbiA family. The cofactor is Mg(2+).

It catalyses the reaction cob(II)yrinate + 2 L-glutamine + 2 ATP + 2 H2O = cob(II)yrinate a,c diamide + 2 L-glutamate + 2 ADP + 2 phosphate + 2 H(+). The enzyme catalyses Ni-sirohydrochlorin + 2 L-glutamine + 2 ATP + 2 H2O = Ni-sirohydrochlorin a,c-diamide + 2 L-glutamate + 2 ADP + 2 phosphate + 2 H(+). The protein operates within cofactor biosynthesis; adenosylcobalamin biosynthesis; cob(II)yrinate a,c-diamide from sirohydrochlorin (anaerobic route): step 10/10. Catalyzes the ATP-dependent amidation of the two carboxylate groups at positions a and c of cobyrinate, using either L-glutamine or ammonia as the nitrogen source. Involved in the biosynthesis of the unique nickel-containing tetrapyrrole coenzyme F430, the prosthetic group of methyl-coenzyme M reductase (MCR), which plays a key role in methanogenesis and anaerobic methane oxidation. Catalyzes the ATP-dependent amidation of the two carboxylate groups at positions a and c of Ni-sirohydrochlorin, using L-glutamine or ammonia as the nitrogen source. This chain is Cobyrinate a,c-diamide synthase, found in Methanobrevibacter smithii (strain ATCC 35061 / DSM 861 / OCM 144 / PS).